A 261-amino-acid polypeptide reads, in one-letter code: Cytochrome c oxidase subunit 3 (261 aa).

Over 1-15 the chain is Mitochondrial matrix; that stretch reads MAHQAHAYHMVDPSP. Residues 16–34 traverse the membrane as a helical segment; sequence WPLTGAIAALLLTSGTAVW. Residues 35 to 40 are Mitochondrial intermembrane-facing; it reads FHFHSL. The chain crosses the membrane as a helical span at residues 41–66; sequence TLLTMGNILLLLTMYQWWRDIIREGT. The Mitochondrial matrix segment spans residues 67–72; it reads FQGHHT. The helical transmembrane segment at 73 to 105 threads the bilayer; the sequence is PPVQKGLRYGMILFITSEVFFFLGFFWAFYHSS. The Mitochondrial intermembrane segment spans residues 106–128; that stretch reads LSPTPELGGCWPPTGIITLDPFE. The helical transmembrane segment at 129-152 threads the bilayer; it reads VPLLNTAVLLASGVTVTWAHHSIM. Topologically, residues 153 to 155 are mitochondrial matrix; that stretch reads EGE. Residues 156-183 traverse the membrane as a helical segment; the sequence is RKQTIQALTLTILLGFYFTFLQGMEYYE. Residues 184 to 190 are Mitochondrial intermembrane-facing; it reads APFTIAD. Residues 191 to 223 traverse the membrane as a helical segment; it reads GVYGSTFFVATGFHGLHVIIGSTFLAICLLRQI. Residues 224-232 are Mitochondrial matrix-facing; sequence QYHFTSEHH. The helical transmembrane segment at 233-256 threads the bilayer; it reads FGFEAAAWYWHFVDVVWLFLYVSI. The Mitochondrial intermembrane segment spans residues 257 to 261; sequence YWWGS.

Belongs to the cytochrome c oxidase subunit 3 family. As to quaternary structure, component of the cytochrome c oxidase (complex IV, CIV), a multisubunit enzyme composed of 14 subunits. The complex is composed of a catalytic core of 3 subunits MT-CO1, MT-CO2 and MT-CO3, encoded in the mitochondrial DNA, and 11 supernumerary subunits COX4I, COX5A, COX5B, COX6A, COX6B, COX6C, COX7A, COX7B, COX7C, COX8 and NDUFA4, which are encoded in the nuclear genome. The complex exists as a monomer or a dimer and forms supercomplexes (SCs) in the inner mitochondrial membrane with NADH-ubiquinone oxidoreductase (complex I, CI) and ubiquinol-cytochrome c oxidoreductase (cytochrome b-c1 complex, complex III, CIII), resulting in different assemblies (supercomplex SCI(1)III(2)IV(1) and megacomplex MCI(2)III(2)IV(2)).

The protein localises to the mitochondrion inner membrane. The catalysed reaction is 4 Fe(II)-[cytochrome c] + O2 + 8 H(+)(in) = 4 Fe(III)-[cytochrome c] + 2 H2O + 4 H(+)(out). In terms of biological role, component of the cytochrome c oxidase, the last enzyme in the mitochondrial electron transport chain which drives oxidative phosphorylation. The respiratory chain contains 3 multisubunit complexes succinate dehydrogenase (complex II, CII), ubiquinol-cytochrome c oxidoreductase (cytochrome b-c1 complex, complex III, CIII) and cytochrome c oxidase (complex IV, CIV), that cooperate to transfer electrons derived from NADH and succinate to molecular oxygen, creating an electrochemical gradient over the inner membrane that drives transmembrane transport and the ATP synthase. Cytochrome c oxidase is the component of the respiratory chain that catalyzes the reduction of oxygen to water. Electrons originating from reduced cytochrome c in the intermembrane space (IMS) are transferred via the dinuclear copper A center (CU(A)) of subunit 2 and heme A of subunit 1 to the active site in subunit 1, a binuclear center (BNC) formed by heme A3 and copper B (CU(B)). The BNC reduces molecular oxygen to 2 water molecules using 4 electrons from cytochrome c in the IMS and 4 protons from the mitochondrial matrix. This Salmo salar (Atlantic salmon) protein is Cytochrome c oxidase subunit 3 (mt-co3).